Consider the following 208-residue polypeptide: Small ribosomal subunit protein uS4 (208 aa).

Positions 31–51 (SALDKRAYGPGQHGQRRAKTS) are disordered. The region spanning 98–160 (RRLDNVVYRM…TKSNSQVVRA (63 aa)) is the S4 RNA-binding domain.

Belongs to the universal ribosomal protein uS4 family. Part of the 30S ribosomal subunit. Contacts protein S5. The interaction surface between S4 and S5 is involved in control of translational fidelity.

Functionally, one of the primary rRNA binding proteins, it binds directly to 16S rRNA where it nucleates assembly of the body of the 30S subunit. With S5 and S12 plays an important role in translational accuracy. The polypeptide is Small ribosomal subunit protein uS4 (Helicobacter pylori (strain ATCC 700392 / 26695) (Campylobacter pylori)).